The primary structure comprises 82 residues: Cytochrome b-c1 complex subunit 8 (82 aa).

Topologically, residues 1–39 (MGREFGNLTRMRHVISYSLSPFEQRAHPHVFTKGIPNVL) are mitochondrial matrix. A Phosphoserine modification is found at serine 16. Lysine 33 carries the N6-acetyllysine; alternate modification. At lysine 33 the chain carries N6-succinyllysine; alternate. Residues 40–68 (RRFRESFFRVAPQFVVFYLIYTWGTEEFE) traverse the membrane as a helical segment. At 69-82 (RSKRKNPAAYENDK) the chain is on the mitochondrial intermembrane side.

This sequence belongs to the UQCRQ/QCR8 family. Component of the ubiquinol-cytochrome c oxidoreductase (cytochrome b-c1 complex, complex III, CIII), a multisubunit enzyme composed of 11 subunits. The complex is composed of 3 respiratory subunits cytochrome b, cytochrome c1 and Rieske protein UQCRFS1, 2 core protein subunits UQCRC1/QCR1 and UQCRC2/QCR2, and 6 low-molecular weight protein subunits UQCRH/QCR6, UQCRB/QCR7, UQCRQ/QCR8, UQCR10/QCR9, UQCR11/QCR10 and subunit 9, the cleavage product of Rieske protein UQCRFS1. The complex exists as an obligatory dimer and forms supercomplexes (SCs) in the inner mitochondrial membrane with NADH-ubiquinone oxidoreductase (complex I, CI) and cytochrome c oxidase (complex IV, CIV), resulting in different assemblies (supercomplex SCI(1)III(2)IV(1) and megacomplex MCI(2)III(2)IV(2)). Interacts with UQCC6.

The protein resides in the mitochondrion inner membrane. Component of the ubiquinol-cytochrome c oxidoreductase, a multisubunit transmembrane complex that is part of the mitochondrial electron transport chain which drives oxidative phosphorylation. The respiratory chain contains 3 multisubunit complexes succinate dehydrogenase (complex II, CII), ubiquinol-cytochrome c oxidoreductase (cytochrome b-c1 complex, complex III, CIII) and cytochrome c oxidase (complex IV, CIV), that cooperate to transfer electrons derived from NADH and succinate to molecular oxygen, creating an electrochemical gradient over the inner membrane that drives transmembrane transport and the ATP synthase. The cytochrome b-c1 complex catalyzes electron transfer from ubiquinol to cytochrome c, linking this redox reaction to translocation of protons across the mitochondrial inner membrane, with protons being carried across the membrane as hydrogens on the quinol. In the process called Q cycle, 2 protons are consumed from the matrix, 4 protons are released into the intermembrane space and 2 electrons are passed to cytochrome c. In Pongo abelii (Sumatran orangutan), this protein is Cytochrome b-c1 complex subunit 8 (UQCRQ).